We begin with the raw amino-acid sequence, 427 residues long: UPF0229 protein bll6755 (427 aa).

Positions 86–107 are disordered; it reads DYLQRSGQGSAKDSGPGEGDSE.

It belongs to the UPF0229 family.

This chain is UPF0229 protein bll6755, found in Bradyrhizobium diazoefficiens (strain JCM 10833 / BCRC 13528 / IAM 13628 / NBRC 14792 / USDA 110).